Consider the following 614-residue polypeptide: Probable glycerol-3-phosphate dehydrogenase (614 aa).

57-85 (DLVVVGGGSTGAGCALDGATRGLKVALVD) contacts FAD. Residues 595–614 (MECPEEKRHRGERRLPPQEK) are disordered. The segment covering 598–614 (PEEKRHRGERRLPPQEK) has biased composition (basic and acidic residues).

It belongs to the FAD-dependent glycerol-3-phosphate dehydrogenase family. FAD serves as cofactor.

Its subcellular location is the cytoplasm. It catalyses the reaction a quinone + sn-glycerol 3-phosphate = dihydroxyacetone phosphate + a quinol. Its pathway is polyol metabolism; glycerol degradation via glycerol kinase pathway; glycerone phosphate from sn-glycerol 3-phosphate (anaerobic route): step 1/1. The sequence is that of Probable glycerol-3-phosphate dehydrogenase from Encephalitozoon cuniculi (strain GB-M1) (Microsporidian parasite).